A 63-amino-acid chain; its full sequence is Large ribosomal subunit protein uL29 (63 aa).

The protein belongs to the universal ribosomal protein uL29 family.

The sequence is that of Large ribosomal subunit protein uL29 from Sodalis glossinidius (strain morsitans).